We begin with the raw amino-acid sequence, 246 residues long: Orotidine 5'-phosphate decarboxylase (246 aa).

Substrate contacts are provided by residues Asp-22, Lys-44, 71 to 80 (DLKYHDIPHT), Thr-130, Arg-191, Gln-201, Gly-221, and Arg-222. Lys-73 serves as the catalytic Proton donor.

It belongs to the OMP decarboxylase family. Type 1 subfamily. Homodimer.

The enzyme catalyses orotidine 5'-phosphate + H(+) = UMP + CO2. It participates in pyrimidine metabolism; UMP biosynthesis via de novo pathway; UMP from orotate: step 2/2. Catalyzes the decarboxylation of orotidine 5'-monophosphate (OMP) to uridine 5'-monophosphate (UMP). The polypeptide is Orotidine 5'-phosphate decarboxylase (Neisseria meningitidis serogroup C (strain 053442)).